The sequence spans 138 residues: Basic phospholipase A2 chain HDP-2P (138 aa).

The signal sequence occupies residues methionine 1–glycine 16. Disulfide bonds link cysteine 42-cysteine 131, cysteine 44-cysteine 60, cysteine 59-cysteine 111, cysteine 65-cysteine 138, cysteine 66-cysteine 104, cysteine 73-cysteine 97, and cysteine 91-cysteine 102. Residues tyrosine 43, glycine 45, and glycine 47 each coordinate Ca(2+). Histidine 63 is an active-site residue. Aspartate 64 lines the Ca(2+) pocket. Residue aspartate 105 is part of the active site.

Heterodimer of an acidic and a basic chain; non-covalently linked. The toxic basic protein has phospholipase A2 activity (chain HDP-2P) and the non-toxic acidic protein functions as its inhibitor (chain HPD-1I (AC A4VBF0)). The cofactor is Ca(2+). In terms of tissue distribution, expressed by the venom gland.

It localises to the secreted. It carries out the reaction a 1,2-diacyl-sn-glycero-3-phosphocholine + H2O = a 1-acyl-sn-glycero-3-phosphocholine + a fatty acid + H(+). With respect to regulation, enzymatic activity and neurotoxicity are inhibited by Triton X-100. Triton X-100 has been determined to be located in the center of the hydrophobic channel of the enzyme. Its function is as follows. Monomer: snake venom phospholipase A2 (PLA2) that affects neuromuscular transmission presynaptically. It has catalytic activity, anticoagulant activity and weakly inhibits ADP-induced platelet aggregation. PLA2 catalyzes the calcium-dependent hydrolysis of the 2-acyl groups in 3-sn-phosphoglycerides. Heterodimer: shows the same activities as the monomer, but with a lower potency. The sequence is that of Basic phospholipase A2 chain HDP-2P from Vipera nikolskii (Nikolsky's adder).